A 380-amino-acid chain; its full sequence is Aprataxin (380 aa).

Positions 36–85 (PVIIGRTPELGITDKLCSRSQLELTSNCYKRYVLVKRLGANTSQINGIDI) constitute an FHA-like domain. The tract at residues 176-207 (VYAFDSPSPMSSRCEKKAESNKRAPTHKHWSQ) is disordered. Positions 188 to 197 (RCEKKAESNK) are enriched in basic and acidic residues. Residues 206 to 312 (SQGLKASMED…ISQDFQSSSF (107 aa)) form the HIT domain. 2 interaction with DNA substrate regions span residues 231 to 235 (DKYPK) and 294 to 295 (SM). Residues 297 to 301 (QMHMH) carry the Histidine triad motif motif. Residue His299 is the Tele-AMP-histidine intermediate of the active site. The segment at 356–378 (LKCHRCKKPQKNIPTLKKHIDSC) adopts a C2H2-type; atypical zinc-finger fold.

It localises to the nucleus. The protein resides in the nucleoplasm. Its subcellular location is the nucleolus. It catalyses the reaction a 5'-end adenosine-5'-diphospho-5'-2'-deoxyribonucleoside-DNA + H2O = a 5'-end 5'-phospho-2'-deoxyribonucleoside-DNA + AMP + 2 H(+). It carries out the reaction a 5'-end adenosine-5'-diphospho-5'-ribonucleoside-2'-deoxyribonucleotide-DNA + H2O = a 5'-end 5'-phospho-ribonucleoside-2'-deoxyribonucleotide-DNA + AMP + 2 H(+). The catalysed reaction is a 3'-end 2'-deoxyribonucleotide-3'-diphospho-5'-guanosine-DNA + H2O = a 3'-end 2'-deoxyribonucleotide 3'-phosphate-DNA + GMP + 2 H(+). In terms of biological role, DNA-binding protein involved in single-strand DNA break repair, double-strand DNA break repair and base excision repair. Resolves abortive DNA ligation intermediates formed either at base excision sites, or when DNA ligases attempt to repair non-ligatable breaks induced by reactive oxygen species. Catalyzes the release of adenylate groups covalently linked to 5'-phosphate termini, resulting in the production of 5'-phosphate termini that can be efficiently rejoined. Also able to hydrolyze adenosine 5'-monophosphoramidate (AMP-NH(2)) and diadenosine tetraphosphate (AppppA), but with lower catalytic activity. Likewise, catalyzes the release of 3'-linked guanosine (DNAppG) and inosine (DNAppI) from DNA, but has higher specific activity with 5'-linked adenosine (AppDNA). The polypeptide is Aprataxin (APTX) (Ciona intestinalis (Transparent sea squirt)).